A 413-amino-acid chain; its full sequence is NADH:flavin oxidoreductase FG08077 (413 aa).

FMN is bound at residue 53–56 (APLC). Residue Y58 coordinates substrate. FMN is bound by residues A88 and Q130. 211–214 (HAAH) provides a ligand contact to substrate. Residues R264 and 370 to 371 (GR) each bind FMN.

Belongs to the NADH:flavin oxidoreductase/NADH oxidase family. NamA subfamily. FMN is required as a cofactor.

It functions in the pathway mycotoxin biosynthesis. NADH:flavin oxidoreductase; part of the gene cluster that mediates the biosynthesis of butenolide, a mycotoxin that shows antibiotic activity but does not seem to play a major role in the spread of head blight in wheat. Butenolide is derived from glutamic acid via a 4-acetamido-2-butenoic acid intermediate. The predicted function of the NADH:flavin oxidoreductase FG08077, the cytochrome P450 monooxygenase FG08079, the decarboxylase FG08083, and the putative acetyltransferase FG08082 are consistent with this pathway, however, the respective activities of the butelonide biosynthesis cluster enzymes have still to be experimentally determined. The protein is NADH:flavin oxidoreductase FG08077 of Gibberella zeae (strain ATCC MYA-4620 / CBS 123657 / FGSC 9075 / NRRL 31084 / PH-1) (Wheat head blight fungus).